Here is an 830-residue protein sequence, read N- to C-terminus: Interleukin-4 receptor subunit alpha (830 aa).

The N-terminal stretch at M1–G32 is a signal peptide. The Extracellular segment spans residues V33–R240. Cysteines 41 and 51 form a disulfide. N-linked (GlcNAc...) asparagine glycosylation is found at N60 and N78. C82 and C94 form a disulfide bridge. N120, N142, and N170 each carry an N-linked (GlcNAc...) asparagine glycan. The region spanning A133 to Y232 is the Fibronectin type-III domain. S172 carries the phosphoserine modification. Residues N184 and N217 are each glycosylated (N-linked (GlcNAc...) asparagine). Positions W220–S224 match the WSXWS motif motif. The chain crosses the membrane as a helical span at residues L241–I264. Over R265–S830 the chain is Cytoplasmic. Residues W270–A278 carry the Box 1 motif motif. The segment covering E378–D387 has biased composition (acidic residues). Disordered regions lie at residues E378–Q403 and M450–S488. The interval E444–S564 is required for IRS1 activation and IL4-induced cell growth. Y504 carries the phosphotyrosine modification. Disordered stretches follow at residues S508–Y610 and C623–K696. A compositionally biased stretch (acidic residues) spans G518–E534. Residues P538–Q551 show a composition bias toward pro residues. A required for IL4-induced gene expression region spans residues S564–L662. The segment covering A570–G582 has biased composition (low complexity). Residues Y583 and Y610 each carry the phosphotyrosine modification. Residues C623–E635 are compositionally biased toward polar residues. Y638 is modified (phosphotyrosine). Composition is skewed to pro residues over residues P646–T655 and E665–P676. The ITIM motif motif lies at I716–L721. A disordered region spans residues S811–S830.

The protein belongs to the type I cytokine receptor family. Type 4 subfamily. The functional IL4 receptor is formed by initial binding of IL4 to IL4R. Subsequent recruitment to the complex of the common gamma chain, in immune cells, creates a type I receptor and, in non-immune cells, of IL13RA1 forms a type II receptor. IL4R can also interact with the IL13/IL13RA1 complex to form a similar type II receptor. Interacts with PIK3C3. Interacts with the SH2-containing phosphatases, PTPN6/SHIP1, PTPN11/SHIP2 and INPP5D/SHIP. Interacts with JAK1 through a Box 1-containing region; inhibited by SOCS5. Interacts with SOCS5; inhibits IL4 signaling. Interacts with JAK3. Interacts with CLM1. Interacts with IL13RA2. In terms of processing, on IL4 binding, phosphorylated on C-terminal tyrosine residues.

The protein localises to the membrane. Functionally, receptor for both interleukin 4 and interleukin 13. Couples to the JAK1/2/3-STAT6 pathway. The IL4 response is involved in promoting Th2 differentiation. The IL4/IL13 responses are involved in regulating IgE production and, chemokine and mucus production at sites of allergic inflammation. In certain cell types, can signal through activation of insulin receptor substrates, IRS1/IRS2. The chain is Interleukin-4 receptor subunit alpha (IL4R) from Sus scrofa (Pig).